Reading from the N-terminus, the 485-residue chain is Alpha,alpha-trehalose-phosphate synthase [UDP-forming] (485 aa).

Tyr99 and Asp153 together coordinate D-glucose 6-phosphate. Residues Arg290 and Lys295 each coordinate UDP. Residues Arg290 and Lys295 each contribute to the UDP-alpha-D-glucose site. Arg328 lines the D-glucose 6-phosphate pocket. UDP contacts are provided by residues Ile367 and 393 to 397; that span reads LVSYE. UDP-alpha-D-glucose is bound by residues Ile367 and 389–397; that span reads DGMNLVSYE.

This sequence belongs to the glycosyltransferase 20 family.

It carries out the reaction D-glucose 6-phosphate + UDP-alpha-D-glucose = alpha,alpha-trehalose 6-phosphate + UDP + H(+). It functions in the pathway carbohydrate biosynthesis. Synthase catalytic subunit of the trehalose synthase complex that catalyzes the production of trehalose from glucose-6-phosphate and UDP-alpha-D-glucose in a two step process. This chain is Alpha,alpha-trehalose-phosphate synthase [UDP-forming], found in Zygosaccharomyces rouxii.